The following is a 646-amino-acid chain: Threonine--tRNA ligase (646 aa).

In terms of domain architecture, TGS spans 1–63 (MADLSIIFPD…SSGGSIEIIT (63 aa)). Positions 244-541 (DHRKLGKELG…LIEEYKGAFP (298 aa)) are catalytic. Zn(2+) is bound by residues Cys337, His388, and His518.

It belongs to the class-II aminoacyl-tRNA synthetase family. In terms of assembly, homodimer. Zn(2+) is required as a cofactor.

It is found in the cytoplasm. The enzyme catalyses tRNA(Thr) + L-threonine + ATP = L-threonyl-tRNA(Thr) + AMP + diphosphate + H(+). Functionally, catalyzes the attachment of threonine to tRNA(Thr) in a two-step reaction: L-threonine is first activated by ATP to form Thr-AMP and then transferred to the acceptor end of tRNA(Thr). Also edits incorrectly charged L-seryl-tRNA(Thr). This is Threonine--tRNA ligase from Oceanobacillus iheyensis (strain DSM 14371 / CIP 107618 / JCM 11309 / KCTC 3954 / HTE831).